A 257-amino-acid polypeptide reads, in one-letter code: Thiazole synthase (257 aa).

Residue Lys99 is the Schiff-base intermediate with DXP of the active site. Residues Gly160, 186–187 (AG), and 208–209 (NT) contribute to the 1-deoxy-D-xylulose 5-phosphate site.

The protein belongs to the ThiG family. As to quaternary structure, homotetramer. Forms heterodimers with either ThiH or ThiS.

It is found in the cytoplasm. The catalysed reaction is [ThiS sulfur-carrier protein]-C-terminal-Gly-aminoethanethioate + 2-iminoacetate + 1-deoxy-D-xylulose 5-phosphate = [ThiS sulfur-carrier protein]-C-terminal Gly-Gly + 2-[(2R,5Z)-2-carboxy-4-methylthiazol-5(2H)-ylidene]ethyl phosphate + 2 H2O + H(+). Its pathway is cofactor biosynthesis; thiamine diphosphate biosynthesis. In terms of biological role, catalyzes the rearrangement of 1-deoxy-D-xylulose 5-phosphate (DXP) to produce the thiazole phosphate moiety of thiamine. Sulfur is provided by the thiocarboxylate moiety of the carrier protein ThiS. In vitro, sulfur can be provided by H(2)S. This chain is Thiazole synthase, found in Thermodesulfovibrio yellowstonii (strain ATCC 51303 / DSM 11347 / YP87).